A 159-amino-acid polypeptide reads, in one-letter code: Transmembrane protein 88 (159 aa).

The next 2 membrane-spanning stretches (helical) occupy residues 43–63 (LLLLVLVLGTILLPAVTMLGF) and 88–108 (FTALLVTGFLLLVPLLVLALA). The segment at 137–159 (PQPRQIRASPGSQAVPTSGKVWV) is disordered.

This sequence belongs to the TMEM88 family. In terms of assembly, interacts (via C-terminus) with DVL1.

Its subcellular location is the cell membrane. In terms of biological role, inhibits the Wnt/beta-catenin signaling pathway. Crucial for heart development and acts downstream of GATA factors in the pre-cardiac mesoderm to specify lineage commitment of cardiomyocyte development. This Homo sapiens (Human) protein is Transmembrane protein 88 (TMEM88).